The sequence spans 938 residues: Isoleucine--tRNA ligase (938 aa).

The 'HIGH' region motif lies at 58-68 (PYANGSIHIGH). K183 is modified (N6-acetyllysine). Position 561 (E561) interacts with L-isoleucyl-5'-AMP. The 'KMSKS' region motif lies at 602–606 (KMSKS). Position 605 (K605) interacts with ATP. Zn(2+) contacts are provided by C901, C904, C921, and C924.

It belongs to the class-I aminoacyl-tRNA synthetase family. IleS type 1 subfamily. As to quaternary structure, monomer. Requires Zn(2+) as cofactor.

It localises to the cytoplasm. It carries out the reaction tRNA(Ile) + L-isoleucine + ATP = L-isoleucyl-tRNA(Ile) + AMP + diphosphate. Functionally, catalyzes the attachment of isoleucine to tRNA(Ile). As IleRS can inadvertently accommodate and process structurally similar amino acids such as valine, to avoid such errors it has two additional distinct tRNA(Ile)-dependent editing activities. One activity is designated as 'pretransfer' editing and involves the hydrolysis of activated Val-AMP. The other activity is designated 'posttransfer' editing and involves deacylation of mischarged Val-tRNA(Ile). This chain is Isoleucine--tRNA ligase, found in Shigella flexneri.